The chain runs to 279 residues: Expansin-A22 (279 aa).

The first 27 residues, 1-27, serve as a signal peptide directing secretion; the sequence is MKLLEKMIYVEFLMIIMVIWVVPMSYG. One can recognise an Expansin-like EG45 domain in the interval 76–186; the sequence is QGACGYGNLF…RRIPCSKTGG (111 aa). One can recognise an Expansin-like CBD domain in the interval 196-275; that stretch reads YFLMVLIYNV…NWGFGQTFDG (80 aa).

The protein belongs to the expansin family. Expansin A subfamily.

Its subcellular location is the secreted. The protein resides in the cell wall. It localises to the membrane. Functionally, causes loosening and extension of plant cell walls by disrupting non-covalent bonding between cellulose microfibrils and matrix glucans. No enzymatic activity has been found. This is Expansin-A22 (EXPA22) from Arabidopsis thaliana (Mouse-ear cress).